Reading from the N-terminus, the 584-residue chain is A-type ATP synthase subunit A (584 aa).

ATP is bound at residue 234–241 (GPFGSGKT).

Belongs to the ATPase alpha/beta chains family. As to quaternary structure, has multiple subunits with at least A(3), B(3), C, D, E, F, H, I and proteolipid K(x).

It is found in the cell membrane. The enzyme catalyses ATP + H2O + 4 H(+)(in) = ADP + phosphate + 5 H(+)(out). Functionally, component of the A-type ATP synthase that produces ATP from ADP in the presence of a proton gradient across the membrane. The A chain is the catalytic subunit. The sequence is that of A-type ATP synthase subunit A from Methanoculleus marisnigri (strain ATCC 35101 / DSM 1498 / JR1).